Consider the following 71-residue polypeptide: MHMSLEVLEQLESKVQSAVDNISLLKMELDELKEQNNKLQDENHQLRNEHVAWQERLRALLGKMDQMGESI.

A coiled-coil region spans residues 5–67 (LEVLEQLESK…RALLGKMDQM (63 aa)).

Belongs to the ZapB family. In terms of assembly, homodimer. The ends of the coiled-coil dimer bind to each other, forming polymers. Interacts with FtsZ.

Its subcellular location is the cytoplasm. Non-essential, abundant cell division factor that is required for proper Z-ring formation. It is recruited early to the divisome by direct interaction with FtsZ, stimulating Z-ring assembly and thereby promoting cell division earlier in the cell cycle. Its recruitment to the Z-ring requires functional FtsA or ZipA. The chain is Cell division protein ZapB from Aeromonas hydrophila subsp. hydrophila (strain ATCC 7966 / DSM 30187 / BCRC 13018 / CCUG 14551 / JCM 1027 / KCTC 2358 / NCIMB 9240 / NCTC 8049).